We begin with the raw amino-acid sequence, 301 residues long: Haloalkane dehalogenase (301 aa).

Residues 47–284 (PPIVLLHGEP…INASHFIQED (238 aa)) form the AB hydrolase-1 domain. Asp123 acts as the Nucleophile in catalysis. Catalysis depends on Asp250, which acts as the Proton donor. The Proton acceptor role is filled by His279.

Belongs to the haloalkane dehalogenase family. Type 1 subfamily. In terms of assembly, monomer.

It catalyses the reaction 1-haloalkane + H2O = a halide anion + a primary alcohol + H(+). Its function is as follows. Catalyzes hydrolytic cleavage of carbon-halogen bonds in halogenated aliphatic compounds, leading to the formation of the corresponding primary alcohols, halide ions and protons. The protein is Haloalkane dehalogenase of Mycolicibacterium paratuberculosis (strain ATCC BAA-968 / K-10) (Mycobacterium paratuberculosis).